Consider the following 372-residue polypeptide: L-lysine 4-hydroxylase (372 aa).

Positions 176, 178, and 312 each coordinate Fe cation.

The protein belongs to the clavaminate synthase family. Requires Fe(2+) as cofactor.

The enzyme catalyses L-lysine + 2-oxoglutarate + O2 = (4R)-4-hydroxy-L-lysine + succinate + CO2. Its function is as follows. Alpha-ketoglutarate-dependent dioxygenase that in vitro catalyzes the regio- and stereoselective hydroxylation of L-lysine, leading to (4R)-4-hydroxy-L-lysine. The chain is L-lysine 4-hydroxylase from Flavobacterium sp. (strain CF136).